The primary structure comprises 458 residues: Exodeoxyribonuclease 7 large subunit (458 aa).

The protein belongs to the XseA family. In terms of assembly, heterooligomer composed of large and small subunits.

Its subcellular location is the cytoplasm. It catalyses the reaction Exonucleolytic cleavage in either 5'- to 3'- or 3'- to 5'-direction to yield nucleoside 5'-phosphates.. In terms of biological role, bidirectionally degrades single-stranded DNA into large acid-insoluble oligonucleotides, which are then degraded further into small acid-soluble oligonucleotides. This chain is Exodeoxyribonuclease 7 large subunit, found in Escherichia coli O17:K52:H18 (strain UMN026 / ExPEC).